A 660-amino-acid polypeptide reads, in one-letter code: Bifunctional polymyxin resistance protein ArnA (660 aa).

The formyltransferase ArnAFT stretch occupies residues 1-304; the sequence is MKAVIFAYHD…TLGLVAGARL (304 aa). The active-site Proton donor; for formyltransferase activity is the H104. (6R)-10-formyltetrahydrofolate contacts are provided by residues R114 and 136 to 140; that span reads VKRAD. A dehydrogenase ArnADH region spans residues 314–660; that stretch reads RRIRVLILGV…RSVDVAERAS (347 aa). Residues D347 and 368–369 each bind NAD(+); that span reads DI. UDP-alpha-D-glucuronate-binding positions include A393, Y398, and 432–433; that span reads TS. The active-site Proton acceptor; for decarboxylase activity is the E434. Residues R460, N492, 526 to 535, and Y613 contribute to the UDP-alpha-D-glucuronate site; that span reads KLIDGGQQKR. R619 acts as the Proton donor; for decarboxylase activity in catalysis.

In the N-terminal section; belongs to the Fmt family. UDP-L-Ara4N formyltransferase subfamily. This sequence in the C-terminal section; belongs to the NAD(P)-dependent epimerase/dehydratase family. UDP-glucuronic acid decarboxylase subfamily. In terms of assembly, homohexamer, formed by a dimer of trimers.

The catalysed reaction is UDP-alpha-D-glucuronate + NAD(+) = UDP-beta-L-threo-pentopyranos-4-ulose + CO2 + NADH. The enzyme catalyses UDP-4-amino-4-deoxy-beta-L-arabinose + (6R)-10-formyltetrahydrofolate = UDP-4-deoxy-4-formamido-beta-L-arabinose + (6S)-5,6,7,8-tetrahydrofolate + H(+). It functions in the pathway nucleotide-sugar biosynthesis; UDP-4-deoxy-4-formamido-beta-L-arabinose biosynthesis; UDP-4-deoxy-4-formamido-beta-L-arabinose from UDP-alpha-D-glucuronate: step 1/3. The protein operates within nucleotide-sugar biosynthesis; UDP-4-deoxy-4-formamido-beta-L-arabinose biosynthesis; UDP-4-deoxy-4-formamido-beta-L-arabinose from UDP-alpha-D-glucuronate: step 3/3. Its pathway is bacterial outer membrane biogenesis; lipopolysaccharide biosynthesis. Bifunctional enzyme that catalyzes the oxidative decarboxylation of UDP-glucuronic acid (UDP-GlcUA) to UDP-4-keto-arabinose (UDP-Ara4O) and the addition of a formyl group to UDP-4-amino-4-deoxy-L-arabinose (UDP-L-Ara4N) to form UDP-L-4-formamido-arabinose (UDP-L-Ara4FN). The modified arabinose is attached to lipid A and is required for resistance to polymyxin and cationic antimicrobial peptides. The sequence is that of Bifunctional polymyxin resistance protein ArnA from Salmonella enteritidis PT4 (strain P125109).